Here is a 115-residue protein sequence, read N- to C-terminus: Large ribosomal subunit protein bL19 (115 aa).

Belongs to the bacterial ribosomal protein bL19 family.

In terms of biological role, this protein is located at the 30S-50S ribosomal subunit interface and may play a role in the structure and function of the aminoacyl-tRNA binding site. The polypeptide is Large ribosomal subunit protein bL19 (Wigglesworthia glossinidia brevipalpis).